The following is a 337-amino-acid chain: MKLSRLALLSVFALASAPSWAESVVTVYSIDGLHDGDNSWYQVQFDAFTKATGITVRYVEGGGGVVVERLAKERTNPQADVLVTAPPFIQRAAAEKLLANFNTDTASAIPDANNLYSPLVKNYLSFIYNSKLLKTAPASWQDLLDGKFKNKLQYSTPGQAADGTAVMLQAFHSFGSKDAGFAYLGKLQANNVGPSASTGKLTALVNKGEIYVANGDLQMNLAQMERNPNVKIFWPANDKGERSALAIPYVIGLVQGAPQSENGKKLINFLLSKEAQTRVSELSWGMPVRSDVTPSDEHYKAATAALEGVQSWQPNWDDVAVSLSADISRWHKVTESE.

The signal sequence occupies residues 1-21 (MKLSRLALLSVFALASAPSWA).

It belongs to the bacterial solute-binding protein 1 family.

It is found in the periplasm. Its function is as follows. Probably part of the PhnSTUV complex (TC 3.A.1.11.5) involved in 2-aminoethylphosphonate import. This Salmonella typhimurium (strain LT2 / SGSC1412 / ATCC 700720) protein is Putative 2-aminoethylphosphonate-binding periplasmic protein (phnS).